The following is a 49-amino-acid chain: Large ribosomal subunit protein bL33 (49 aa).

The protein belongs to the bacterial ribosomal protein bL33 family.

The chain is Large ribosomal subunit protein bL33 from Alkaliphilus oremlandii (strain OhILAs) (Clostridium oremlandii (strain OhILAs)).